A 293-amino-acid polypeptide reads, in one-letter code: Ribosomal RNA small subunit methyltransferase A (293 aa).

S-adenosyl-L-methionine-binding residues include asparagine 29, leucine 31, glycine 56, glutamate 77, aspartate 102, and asparagine 127.

Belongs to the class I-like SAM-binding methyltransferase superfamily. rRNA adenine N(6)-methyltransferase family. RsmA subfamily.

Its subcellular location is the cytoplasm. It carries out the reaction adenosine(1518)/adenosine(1519) in 16S rRNA + 4 S-adenosyl-L-methionine = N(6)-dimethyladenosine(1518)/N(6)-dimethyladenosine(1519) in 16S rRNA + 4 S-adenosyl-L-homocysteine + 4 H(+). Its function is as follows. Specifically dimethylates two adjacent adenosines (A1518 and A1519) in the loop of a conserved hairpin near the 3'-end of 16S rRNA in the 30S particle. May play a critical role in biogenesis of 30S subunits. This Geobacillus thermodenitrificans (strain NG80-2) protein is Ribosomal RNA small subunit methyltransferase A.